A 207-amino-acid chain; its full sequence is MARCKS-related protein 1-B (207 aa).

Low complexity-rich tracts occupy residues 1–25 (MGSQ…AAVK) and 63–77 (AGAG…AAEG). A disordered region spans residues 1–207 (MGSQASKGGV…STPAPSEQKE (207 aa)). A lipid anchor (N-myristoyl glycine) is attached at Gly2. Residues 78-90 (EAAKPEGEATKET) show a composition bias toward basic and acidic residues. Residues 93-116 (KKKKKFSLKNSFKFKGISLKKSKK) are effector domain involved in lipid-binding. Low complexity predominate over residues 100-109 (LKNSFKFKGI). 2 stretches are compositionally biased toward basic and acidic residues: residues 131-154 (TEEK…KAEE) and 163-182 (PKAE…KEEA). Residues 195–207 (ETNSTPAPSEQKE) show a composition bias toward polar residues.

It belongs to the MARCKS family. Strongly expressed in brain and eye. Also detected at lower levels in muscle.

Its subcellular location is the cytoplasm. It is found in the cytoskeleton. The protein resides in the cell membrane. Its function is as follows. Involved in the control of cell movement by regulating actin cytoskeleton homeostasis and filopodium and lamellipodium formation. The protein is MARCKS-related protein 1-B of Danio rerio (Zebrafish).